A 336-amino-acid polypeptide reads, in one-letter code: Tetraacyldisaccharide 4'-kinase (336 aa).

Position 58-65 (58-65 (AVGGSGKT)) interacts with ATP.

Belongs to the LpxK family.

The catalysed reaction is a lipid A disaccharide + ATP = a lipid IVA + ADP + H(+). The protein operates within glycolipid biosynthesis; lipid IV(A) biosynthesis; lipid IV(A) from (3R)-3-hydroxytetradecanoyl-[acyl-carrier-protein] and UDP-N-acetyl-alpha-D-glucosamine: step 6/6. Transfers the gamma-phosphate of ATP to the 4'-position of a tetraacyldisaccharide 1-phosphate intermediate (termed DS-1-P) to form tetraacyldisaccharide 1,4'-bis-phosphate (lipid IVA). This is Tetraacyldisaccharide 4'-kinase from Aromatoleum aromaticum (strain DSM 19018 / LMG 30748 / EbN1) (Azoarcus sp. (strain EbN1)).